The following is a 1014-amino-acid chain: Resistance to glucose repression protein 1 (1014 aa).

The segment at 1-63 (MSTNLANYFA…AVQAKNDDDF (63 aa)) is disordered. Residue S2 is modified to N-acetylserine. Residues 11–34 (GKKDIENEHVNRNASHESNSKSDV) are compositionally biased toward basic and acidic residues. T73 is subject to Phosphothreonine. S75 carries the post-translational modification Phosphoserine. Disordered regions lie at residues 90 to 144 (LGRS…YLIP) and 236 to 270 (SEGNAQSEEEHDLERGYGSDDENSKRISMPTKNSK). Over residues 104-115 (YDNSSNNSSSNS) the composition is skewed to low complexity. Residues S242 and S254 each carry the phosphoserine modification. The segment covering 247 to 260 (DLERGYGSDDENSK) has biased composition (basic and acidic residues). A Nuclear localization signal motif is present at residues 277 to 283 (KPILKKR). S311 bears the Phosphoserine mark. Residues 340–463 (YPKESNSSVS…SEKSNKPTKN (124 aa)) form a disordered region. Polar residues-rich tracts occupy residues 343–352 (ESNSSVSLKS), 361–370 (STIPNPVGEN), 389–407 (HVQNNRSTAQSNKSILENS), and 415–455 (LDQN…NPSE). The residue at position 421 (S421) is a Phosphoserine. At Y480 the chain carries Phosphotyrosine. Position 490 is a phosphoserine (S490). Disordered regions lie at residues 531–557 (EHLNKNTSDDDTSSQSSSSSHSDDEEH) and 570–591 (SDSGVHSPITDNSSVASSTTSR). Residues S570, S572, and S576 each carry the phosphoserine modification. Residues 578 to 591 (ITDNSSVASSTTSR) show a composition bias toward polar residues. A Nuclear localization signal motif is present at residues 595–599 (RPIIK). 3 positions are modified to phosphoserine: S610, S614, and S680. Residues 690 to 897 (SKEKHVPQLH…QSFRIVNNTP (208 aa)) form a disordered region. Residues 722-740 (YSSSSDSEQQFIEDSQYNS) show a composition bias toward low complexity. Over residues 741–758 (SDDEEEEDDDDQEVDDNH) the composition is skewed to acidic residues. 2 stretches are compositionally biased toward polar residues: residues 770 to 802 (LGKSGSTNSLYDLAQPSLSSATPQQKNPTNFTG) and 822 to 833 (RNSSSGNFIFNS). The Nuclear localization signal signature appears at 873–879 (KKKALPK). Polar residues predominate over residues 884-897 (SDSSQSFRIVNNTP). A Phosphothreonine modification is found at T896. Residue S898 is modified to Phosphoserine. The segment covering 959 to 972 (KKVDSVQTTRKEAS) has biased composition (basic and acidic residues). Residues 959 to 982 (KKVDSVQTTRKEASLTDSSNESLH) are disordered. Residue S980 is modified to Phosphoserine.

In terms of assembly, interacts with SAK1.

The protein resides in the nucleus. Functionally, involved in RNA processing and negative regulation of glucose repression. Regulates the level of two antigens, P43 and P70. Binds to protein phosphatase type 1. Functions with REG2 and SNF1 protein kinase to regulate growth. Might regulate SNF1 directly or indirectly. The protein is Resistance to glucose repression protein 1 (REG1) of Saccharomyces cerevisiae (strain ATCC 204508 / S288c) (Baker's yeast).